The primary structure comprises 432 residues: G-protein coupled receptor 22 (432 aa).

The Extracellular segment spans residues 1–45 (MCFSPVLEINMQSESNVTVRDDIDDIDTNMYQPLSYPLSFQVSLT). N16 is a glycosylation site (N-linked (GlcNAc...) asparagine). Residues 46–66 (GFLMLEIVLGLGSNLTVLVLY) form a helical membrane-spanning segment. Residues 67–85 (CMKSNLINSVSNIITMNLH) lie on the Cytoplasmic side of the membrane. Residues 86 to 106 (VLDVIICVGCIPLTIVILLLS) traverse the membrane as a helical segment. The Extracellular segment spans residues 107–115 (LESNTALIC). A helical membrane pass occupies residues 116 to 136 (CFHEACVSFASVSTAINVFAI). Residues 137-156 (TLDRYDISVKPANRILTMGR) are Cytoplasmic-facing. A helical transmembrane segment spans residues 157 to 177 (AVMLMTSIWIFSFFSFLIPFI). Topologically, residues 178 to 208 (EVNFFSLQSGNTWANKTLLCVSTSEYYTELG) are extracellular. N-linked (GlcNAc...) asparagine glycosylation occurs at N192. Residues 209 to 229 (MYYHLLVQIPIFFFTVIVMLI) traverse the membrane as a helical segment. The Cytoplasmic portion of the chain corresponds to 230–314 (TYTKILQALN…ERQKRVFKMS (85 aa)). Residues 315-335 (LLIISTFLLCWTPISVLNTTI) traverse the membrane as a helical segment. Residues 336 to 348 (LCLGPSDLLVKLR) are Extracellular-facing. A helical membrane pass occupies residues 349–369 (LCFLVMAYGTTIFHPLLYAFT). The Cytoplasmic portion of the chain corresponds to 370–432 (RQKFQKVLKS…KCLVPQVVTD (63 aa)).

It belongs to the G-protein coupled receptor 1 family. Abundant levels detected in the brain and heart and no detectable expression in other peripheral tissues.

The protein resides in the cell membrane. Its function is as follows. Orphan G-protein coupled receptor. Seems to act through a G(i)/G(o) mediated pathway. May be involved in ciliogenesis. This chain is G-protein coupled receptor 22 (Gpr22), found in Mus musculus (Mouse).